Reading from the N-terminus, the 161-residue chain is Nucleotide-binding protein Shew_2893 (161 aa).

Belongs to the YajQ family.

Its function is as follows. Nucleotide-binding protein. The sequence is that of Nucleotide-binding protein Shew_2893 from Shewanella loihica (strain ATCC BAA-1088 / PV-4).